Consider the following 155-residue polypeptide: UPF0178 protein ACICU_02858 (155 aa).

Residues 120–155 are disordered; it reads GAGVQTGGPPPISERDKREFSSALDQTILKQKRKTA.

The protein belongs to the UPF0178 family.

The polypeptide is UPF0178 protein ACICU_02858 (Acinetobacter baumannii (strain ACICU)).